Here is a 313-residue protein sequence, read N- to C-terminus: ADP-L-glycero-D-manno-heptose-6-epimerase (313 aa).

Residues 10–11 (MI), 31–32 (DN), K38, R53, 75–79 (EGACS), and N92 each bind NADP(+). Residue Y139 is the Proton acceptor of the active site. K143 is a binding site for NADP(+). Residue N174 participates in substrate binding. Positions 175 and 183 each coordinate NADP(+). The active-site Proton acceptor is K183. Substrate-binding positions include S185, H192, 206-209 (FAGS), R214, and Y277.

This sequence belongs to the NAD(P)-dependent epimerase/dehydratase family. HldD subfamily. In terms of assembly, homopentamer. NADP(+) serves as cofactor.

It catalyses the reaction ADP-D-glycero-beta-D-manno-heptose = ADP-L-glycero-beta-D-manno-heptose. It participates in nucleotide-sugar biosynthesis; ADP-L-glycero-beta-D-manno-heptose biosynthesis; ADP-L-glycero-beta-D-manno-heptose from D-glycero-beta-D-manno-heptose 7-phosphate: step 4/4. It functions in the pathway bacterial outer membrane biogenesis; LPS core biosynthesis. In terms of biological role, catalyzes the interconversion between ADP-D-glycero-beta-D-manno-heptose and ADP-L-glycero-beta-D-manno-heptose via an epimerization at carbon 6 of the heptose. This is ADP-L-glycero-D-manno-heptose-6-epimerase from Vibrio vulnificus (strain YJ016).